The chain runs to 94 residues: Co-chaperonin GroES (94 aa).

It belongs to the GroES chaperonin family. In terms of assembly, heptamer of 7 subunits arranged in a ring. Interacts with the chaperonin GroEL.

It is found in the cytoplasm. In terms of biological role, together with the chaperonin GroEL, plays an essential role in assisting protein folding. The GroEL-GroES system forms a nano-cage that allows encapsulation of the non-native substrate proteins and provides a physical environment optimized to promote and accelerate protein folding. GroES binds to the apical surface of the GroEL ring, thereby capping the opening of the GroEL channel. This is Co-chaperonin GroES from Clostridium botulinum.